A 148-amino-acid chain; its full sequence is Phage-like element PBSX protein XkdN (148 aa).

This sequence to B.subtilis YqbN.

This chain is Phage-like element PBSX protein XkdN (xkdN), found in Bacillus subtilis (strain 168).